Here is a 271-residue protein sequence, read N- to C-terminus: MNSPLAPVGVFDSGVGGLTVARAIIDQLPDEDIVYVGDTGNGPYGPLTIPEIRAHALAIGDDLVGRGVKALVIACNSASSACLRDARERYQVPVVEVILPAVRRAVAATRNGRIGVIGTRATITSHAYQDAFAAARDTEITAVACPRFVDFVELGVTSGRQVLGLAQGYLEPLQRAEVDTLVLGCTHYPLLSGLIQLAMGENVTLVSSAEETAKEVVRVLTEIDLLRPHDAPPATRIFEATGDPEAFTKLAARFLGPVLGGVQPVHPSRIH.

Substrate is bound by residues 12–13 (DS) and 44–45 (YG). Residue Cys-75 is the Proton donor/acceptor of the active site. 76–77 (NS) serves as a coordination point for substrate. Cys-185 serves as the catalytic Proton donor/acceptor. 186–187 (TH) is a substrate binding site.

This sequence belongs to the aspartate/glutamate racemases family.

It catalyses the reaction L-glutamate = D-glutamate. The protein operates within cell wall biogenesis; peptidoglycan biosynthesis. Provides the (R)-glutamate required for cell wall biosynthesis. The protein is Glutamate racemase of Mycobacterium bovis (strain BCG / Pasteur 1173P2).